Here is a 192-residue protein sequence, read N- to C-terminus: Ion-translocating oxidoreductase complex subunit A (192 aa).

The next 6 helical transmembrane spans lie at 5–25 (ILLI…FLGL), 39–59 (IGMS…AYLI), 63–83 (ILTP…VIAV), 102–122 (LLGI…VALL), 134–154 (VIYG…FAAL), and 171–191 (SIAL…TGLV).

Belongs to the NqrDE/RnfAE family. As to quaternary structure, the complex is composed of six subunits: RnfA, RnfB, RnfC, RnfD, RnfE and RnfG.

It is found in the cell inner membrane. Its function is as follows. Part of a membrane-bound complex that couples electron transfer with translocation of ions across the membrane. The chain is Ion-translocating oxidoreductase complex subunit A from Pasteurella multocida (strain Pm70).